The primary structure comprises 561 residues: SH3 domain-binding protein 2 (561 aa).

Positions glycine 26–glycine 130 constitute a PH domain. Disordered regions lie at residues valine 160–serine 316 and lysine 333–valine 451. Residues aspartate 170–serine 188 show a composition bias toward acidic residues. Residues tyrosine 174 and tyrosine 183 each carry the phosphotyrosine; by SYK modification. The SH3-binding motif lies at proline 201 to proline 210. Composition is skewed to pro residues over residues proline 202–arginine 213 and proline 233–histidine 242. Over residues glutamate 252 to proline 266 the composition is skewed to basic and acidic residues. Serine 278 bears the Phosphoserine mark. Residues arginine 342–alanine 354 show a composition bias toward pro residues. Phosphoserine occurs at positions 416 and 427. Residue tyrosine 448 is modified to Phosphotyrosine; by SYK. One can recognise an SH2 domain in the interval valine 457–tyrosine 555.

Phosphorylated. Phosphorylation at Tyr-448 may stimulate the activity of the LYN kinase. In terms of tissue distribution, expressed in a variety of tissues including lung, liver, skeletal muscle, kidney and pancreas.

Binds differentially to the SH3 domains of certain proteins of signal transduction pathways. Binds to phosphatidylinositols; linking the hemopoietic tyrosine kinase fes to the cytoplasmic membrane in a phosphorylation dependent mechanism. The sequence is that of SH3 domain-binding protein 2 (SH3BP2) from Homo sapiens (Human).